We begin with the raw amino-acid sequence, 227 residues long: Probable septum site-determining protein MinC (227 aa).

It belongs to the MinC family. As to quaternary structure, interacts with MinD and FtsZ.

Cell division inhibitor that blocks the formation of polar Z ring septums. Rapidly oscillates between the poles of the cell to destabilize FtsZ filaments that have formed before they mature into polar Z rings. Prevents FtsZ polymerization. The protein is Probable septum site-determining protein MinC of Geobacillus thermodenitrificans (strain NG80-2).